The chain runs to 319 residues: Melanoma-associated antigen B2 (319 aa).

Positions 1 to 17 (MPRGQKSKLRAREKRRK) are enriched in basic residues. Positions 1–112 (MPRGQKSKLR…TKSPSEDPLT (112 aa)) are disordered. Low complexity-rich tracts occupy residues 39-57 (PCCS…PAAG), 67-79 (TTAA…VSST), and 94-105 (ASSSQASTSTKS). Phosphoserine is present on residues Ser77 and Ser105. One can recognise an MAGE domain in the interval 111 to 310 (LTRKSGSLVQ…CAFPTHYEEA (200 aa)).

In terms of assembly, interacts with TRIM28. In terms of tissue distribution, expressed in testis and placenta, and in a significant fraction of tumors of various histologic types.

In terms of biological role, may enhance ubiquitin ligase activity of RING-type zinc finger-containing E3 ubiquitin-protein ligases. Proposed to act through recruitment and/or stabilization of the Ubl-conjugating enzyme (E2) at the E3:substrate complex. In Homo sapiens (Human), this protein is Melanoma-associated antigen B2 (MAGEB2).